A 348-amino-acid polypeptide reads, in one-letter code: Ileal sodium/bile acid cotransporter (348 aa).

The Extracellular portion of the chain corresponds to 1-28; sequence MDNSSICNPNATICEGDSCIAPESNFNA. Asparagine 3 and asparagine 10 each carry an N-linked (GlcNAc...) asparagine glycan. A helical membrane pass occupies residues 29 to 49; that stretch reads ILSVVMSTVLTILLALVMFSM. The Cytoplasmic segment spans residues 50–81; that stretch reads GCNVELHKFLGHLRRPWGIVVGFLCQFGIMPL. A helical membrane pass occupies residues 82–102; the sequence is TGFVLSVAFGILPVQAVVVLI. At 103 to 126 the chain is on the extracellular side; it reads QGCCPGGTASNILAYWVDGDMDLS. Residues 127-147 form a helical membrane-spanning segment; the sequence is VSMTTCSTLLALGMMPLCLFI. Over 148–157 the chain is Cytoplasmic; that stretch reads YTKMWVDSGT. Residues 158-178 traverse the membrane as a helical segment; it reads IVIPYDSIGTSLVALVIPVSI. At 179–195 the chain is on the extracellular side; the sequence is GMYVNHKWPQKAKIILK. A helical transmembrane segment spans residues 196–216; that stretch reads IGSIAGAILIVLIAVVGGILY. The Cytoplasmic portion of the chain corresponds to 217-224; it reads QSAWTIEP. A helical transmembrane segment spans residues 225 to 245; the sequence is KLWIIGTIYPIAGYGLGFFLA. Residues 246-284 lie on the Extracellular side of the membrane; the sequence is RIAGQPWYRCRTVALETGLQNTQLCSTIVQLSFSPEDLN. The helical transmembrane segment at 285–305 threads the bilayer; sequence LVFTFPLIYSIFQIAFAAILL. Topologically, residues 306 to 348 are cytoplasmic; it reads GAYVAYKKCHGKNNTELQEKTDNEMEPRSSFQETNKGFQPDEK. Positions 322–332 are enriched in basic and acidic residues; sequence LQEKTDNEMEP. Residues 322–348 form a disordered region; it reads LQEKTDNEMEPRSSFQETNKGFQPDEK. Serine 335 is modified (phosphoserine).

Belongs to the bile acid:sodium symporter (BASS) (TC 2.A.28) family. As to quaternary structure, monomer and homodimer. Mainly expressed in ileum and kidney, lower expression in jejunum.

It is found in the membrane. The catalysed reaction is taurocholate(out) + 2 Na(+)(out) = taurocholate(in) + 2 Na(+)(in). The enzyme catalyses cholate(out) + 2 Na(+)(out) = cholate(in) + 2 Na(+)(in). It carries out the reaction taurochenodeoxycholate(out) + 2 Na(+)(out) = taurochenodeoxycholate(in) + 2 Na(+)(in). It catalyses the reaction tauroursodeoxycholate(out) + 2 Na(+)(out) = tauroursodeoxycholate(in) + 2 Na(+)(in). The catalysed reaction is glycocholate(out) + 2 Na(+)(out) = glycocholate(in) + 2 Na(+)(in). The enzyme catalyses tauronorcholate(out) + 2 Na(+)(out) = tauronorcholate(in) + 2 Na(+)(in). It carries out the reaction tauroallocholate(out) + 2 Na(+)(out) = tauroallocholate(in) + 2 Na(+)(in). It catalyses the reaction taurodeoxycholate(out) + 2 Na(+)(out) = taurodeoxycholate(in) + 2 Na(+)(in). The catalysed reaction is tauro-beta-muricholate(out) + 2 Na(+)(out) = tauro-beta-muricholate(in) + 2 Na(+)(in). Functionally, plays a critical role in the sodium-dependent reabsorption of bile acids from the lumen of the small intestine. Transports various bile acids, unconjugated or conjugated, such as cholate and taurocholate. Also responsible for bile acid transport in the renal proximal tubules, a salvage mechanism that helps conserve bile acids. Works collaboratively with the Na(+)-taurocholate cotransporting polypeptide (NTCP), the organic solute transporter (OST), and the bile salt export pump (BSEP), to ensure efficacious biological recycling of bile acids during enterohepatic circulation. The polypeptide is Ileal sodium/bile acid cotransporter (SLC10A2) (Cricetulus griseus (Chinese hamster)).